We begin with the raw amino-acid sequence, 289 residues long: tRNA dimethylallyltransferase (289 aa).

Residue glycine 9–threonine 16 coordinates ATP. Threonine 11–threonine 16 provides a ligand contact to substrate. The tract at residues aspartate 34 to cysteine 37 is interaction with substrate tRNA.

The protein belongs to the IPP transferase family. Monomer. It depends on Mg(2+) as a cofactor.

The catalysed reaction is adenosine(37) in tRNA + dimethylallyl diphosphate = N(6)-dimethylallyladenosine(37) in tRNA + diphosphate. Functionally, catalyzes the transfer of a dimethylallyl group onto the adenine at position 37 in tRNAs that read codons beginning with uridine, leading to the formation of N6-(dimethylallyl)adenosine (i(6)A). This Campylobacter jejuni (strain RM1221) protein is tRNA dimethylallyltransferase.